A 282-amino-acid polypeptide reads, in one-letter code: Putative phosphoenolpyruvate synthase regulatory protein (282 aa).

162–169 (GVSRSGKT) is a binding site for ADP.

The protein belongs to the pyruvate, phosphate/water dikinase regulatory protein family. PSRP subfamily.

The enzyme catalyses [pyruvate, water dikinase] + ADP = [pyruvate, water dikinase]-phosphate + AMP + H(+). The catalysed reaction is [pyruvate, water dikinase]-phosphate + phosphate + H(+) = [pyruvate, water dikinase] + diphosphate. Functionally, bifunctional serine/threonine kinase and phosphorylase involved in the regulation of the phosphoenolpyruvate synthase (PEPS) by catalyzing its phosphorylation/dephosphorylation. The protein is Putative phosphoenolpyruvate synthase regulatory protein of Psychrobacter arcticus (strain DSM 17307 / VKM B-2377 / 273-4).